The primary structure comprises 360 residues: MVKVVKNFVKVNQYTRPGLKLAGVKGIVMHYTATPGASALNERDYFNGTCIAIKRKASSAHYFVDRKEAQHIIPENEVAYHAHDKNRCYVSFLKPNANTKSISVEMCVEKDGMIHSETVQNAAELVADLCKRYGLSTNKIVRHYDVTNKICPAPWVSDSSQLTTFRKKVDSLLGNKTVSKTTSSTSQSSKSTGTILKKGASGSQVKALQKRLIAAGFSLPKYGADGSYENETVQAVKALQKKAGIAVDGIYGPATEKALAAIGAKKKKPSSNGKKTSYPLPSGIYKVKSPLMKGTGVRQIQEALAALYFYPDKGAKNNGIDGYYGPKTANAVKRFQLMHGLSADGIYGSDTKAKLKTLLK.

The first 39 residues, 1-39 (MVKVVKNFVKVNQYTRPGLKLAGVKGIVMHYTATPGASA), serve as a signal peptide directing secretion. Residues 40–154 (LNERDYFNGT…DVTNKICPAP (115 aa)) enclose the N-acetylmuramoyl-L-alanine amidase domain. 4 repeat units span residues 166-191 (RKKV…SSKS), 196-259 (LKKG…EKAL), 265-289 (KKKK…KVKS), and 291-355 (LMKG…KAKL). 2 X approximate repeats regions lie at residues 166–289 (RKKV…KVKS) and 196–355 (LKKG…KAKL).

The protein belongs to the N-acetylmuramoyl-L-alanine amidase 2 family.

It localises to the secreted. The catalysed reaction is Hydrolyzes the link between N-acetylmuramoyl residues and L-amino acid residues in certain cell-wall glycopeptides.. The polypeptide is N-acetylmuramoyl-L-alanine amidase CwlL (cwlL) (Bacillus licheniformis).